The primary structure comprises 844 residues: 3',5'-cyclic-AMP phosphodiesterase 4A (844 aa).

The disordered stretch occupies residues 1–124; it reads MEPPAAPSER…RSPLDSQASP (124 aa). Residue Ser13 is modified to Phosphoserine. The span at 36 to 46 shows a compositional bias: low complexity; sequence QPRTPIRIQQR. Residues 51–78 are compositionally biased toward basic and acidic residues; the sequence is SAERSETERSPHRPIERADAVDTGDRPG. Polar residues predominate over residues 82 to 91; that stretch reads TRMSWPSSFH. Residue Ser147 is modified to Phosphoserine; by MAPKAPK2. Ser152, Ser160, and Ser204 each carry phosphoserine. The tract at residues 296–317 is disordered; that stretch reads PSPTPRQRAFQQPPPSVLRQSQ. Ser333 carries the post-translational modification Phosphoserine. The 330-residue stretch at 343 to 672 folds into the PDEase domain; that stretch reads VKTDQEDLLA…DWYHSAIRQS (330 aa). Residue Lys344 forms a Glycyl lysine isopeptide (Lys-Gly) (interchain with G-Cter in SUMO) linkage. His419 acts as the Proton donor in catalysis. His419 is a 3',5'-cyclic AMP binding site. Residues His419 and His423 each coordinate AMP. Zn(2+) contacts are provided by His423, His459, Asp460, and Asp577. Residues Asp460, Asp577, Gln628, and Phe631 each coordinate AMP. Asp460 contributes to the Mg(2+) binding site. Asp460 contacts Mn(2+). Residues Gln628 and Phe631 each contribute to the 3',5'-cyclic AMP site. Disordered regions lie at residues 668 to 690 and 818 to 844; these read AIRQ…PSLP and SACS…GDPA. 2 positions are modified to phosphoserine: Ser672 and Ser674. Over residues 820–830 the composition is skewed to polar residues; sequence CSGTSGDNSAI.

The protein belongs to the cyclic nucleotide phosphodiesterase family. PDE4 subfamily. In terms of assembly, interacts with LYN (via SH3 domain). Interacts with ARRB2. The cofactor is Zn(2+). Mg(2+) is required as a cofactor. Requires Mn(2+) as cofactor. Phosphorylated by MAPKAPK2 at Ser-147; it counteracts PKA-induced activation of PDE4A and modulates intracellular cAMP levels. Likely involved in cellular desensitization to cAMP signaling. In terms of processing, proteolytically cleaved by CASP3. In terms of tissue distribution, isoform 2 is testis specific.

The protein localises to the cytoplasm. It is found in the cytosol. Its subcellular location is the membrane. It carries out the reaction 3',5'-cyclic AMP + H2O = AMP + H(+). It functions in the pathway purine metabolism; 3',5'-cyclic AMP degradation; AMP from 3',5'-cyclic AMP: step 1/1. With respect to regulation, inhibited by rolipram. Hydrolyzes the second messenger 3',5'-cyclic AMP (cAMP), which is a key regulator of many important physiological processes. Its function is as follows. Efficiently hydrolyzes cAMP. This chain is 3',5'-cyclic-AMP phosphodiesterase 4A (Pde4a), found in Rattus norvegicus (Rat).